Consider the following 596-residue polypeptide: Arginine--tRNA ligase (596 aa).

The 'HIGH' region motif lies at Ala-128–His-138.

It belongs to the class-I aminoacyl-tRNA synthetase family. As to quaternary structure, monomer.

It localises to the cytoplasm. The catalysed reaction is tRNA(Arg) + L-arginine + ATP = L-arginyl-tRNA(Arg) + AMP + diphosphate. This Acinetobacter baumannii (strain AB307-0294) protein is Arginine--tRNA ligase.